The sequence spans 284 residues: 4-diphosphocytidyl-2-C-methyl-D-erythritol kinase (284 aa).

Lys-14 is an active-site residue. ATP is bound at residue 98–108 (PMGGGIGGGSS). Asp-140 is a catalytic residue.

The protein belongs to the GHMP kinase family. IspE subfamily.

It catalyses the reaction 4-CDP-2-C-methyl-D-erythritol + ATP = 4-CDP-2-C-methyl-D-erythritol 2-phosphate + ADP + H(+). It functions in the pathway isoprenoid biosynthesis; isopentenyl diphosphate biosynthesis via DXP pathway; isopentenyl diphosphate from 1-deoxy-D-xylulose 5-phosphate: step 3/6. Functionally, catalyzes the phosphorylation of the position 2 hydroxy group of 4-diphosphocytidyl-2C-methyl-D-erythritol. The chain is 4-diphosphocytidyl-2-C-methyl-D-erythritol kinase from Shewanella loihica (strain ATCC BAA-1088 / PV-4).